Reading from the N-terminus, the 194-residue chain is MTIKLIVGLANPGAEYAATRHNAGAWYVDFLAERLRAPLREEPKFFGYTSRINLEGEDVRLLVPTTFMNLSGKAVAAMASFYRINPDEILVAHDELDLPPGVAKFKLGGGHGGHNGLKDIISKLGNNPNFHRLRIGIGHPGDKNKVVGFVLGKPPVTEQKLIDEAIDEAARCTEVWFKEGLAKATSRLHTFKAQ.

Tyr-16 provides a ligand contact to tRNA. His-21 functions as the Proton acceptor in the catalytic mechanism. Phe-67, Asn-69, and Asn-115 together coordinate tRNA.

The protein belongs to the PTH family. In terms of assembly, monomer.

The protein localises to the cytoplasm. It catalyses the reaction an N-acyl-L-alpha-aminoacyl-tRNA + H2O = an N-acyl-L-amino acid + a tRNA + H(+). Hydrolyzes ribosome-free peptidyl-tRNAs (with 1 or more amino acids incorporated), which drop off the ribosome during protein synthesis, or as a result of ribosome stalling. In terms of biological role, catalyzes the release of premature peptidyl moieties from peptidyl-tRNA molecules trapped in stalled 50S ribosomal subunits, and thus maintains levels of free tRNAs and 50S ribosomes. The sequence is that of Peptidyl-tRNA hydrolase from Escherichia fergusonii (strain ATCC 35469 / DSM 13698 / CCUG 18766 / IAM 14443 / JCM 21226 / LMG 7866 / NBRC 102419 / NCTC 12128 / CDC 0568-73).